Consider the following 157-residue polypeptide: Oleosin-B1 (157 aa).

Positions 2–20 (GILRKKKHERNASFKSVLT) are polar. The segment at 21–138 (SILATQAATF…AAPAAAPAAA (118 aa)) is hydrophobic. 3 helical membrane-spanning segments follow: residues 22-42 (ILATQAATFLLLISGVSLAGT), 45-65 (AFIATMPLFVVFSPILVPAGI), and 72-92 (TGLAAAGGAGATAVTIILWLY). 9 repeat units span residues 119–122 (PRAA), 123–126 (PAAA), 127–130 (PAAA), 131–134 (PAAA), 135–138 (PAAA), 139–142 (PAPK), 143–146 (PAAA), 147–150 (PAPK), and 151–154 (PAAP). The tract at residues 119 to 122 (PRAA) is 9 X 4 AA tandem repeats of P-[AR]-[AP]-[AKP]. Positions 137–157 (AAPAPKPAAAPAPKPAAPPAL) are disordered. The segment covering 138–157 (APAPKPAAAPAPKPAAPPAL) has biased composition (pro residues).

Belongs to the oleosin family. In terms of tissue distribution, the full-length protein is found in the tapetal lipid bodies of immature anthers, the proteolytically cleaved C-terminal product is found on the coats of pollen grains. Highest expression is in microspores entering and undergoing mitosis. No expression is observed in male-sterile plants, green tissues or roots.

It is found in the lipid droplet. The protein localises to the membrane. Its function is as follows. Many of the major pollen coat proteins are derived from endoproteolytic cleavage of oleosin-like proteins. In Brassica napus (Rape), this protein is Oleosin-B1 (OlnB1).